A 130-amino-acid chain; its full sequence is Small ribosomal subunit protein uS9 (130 aa).

It belongs to the universal ribosomal protein uS9 family.

The protein is Small ribosomal subunit protein uS9 of Aromatoleum aromaticum (strain DSM 19018 / LMG 30748 / EbN1) (Azoarcus sp. (strain EbN1)).